The chain runs to 1036 residues: Putative GPI-anchored protein pfl2 (1036 aa).

The N-terminal stretch at 1 to 23 is a signal peptide; it reads MKFFTASTLFLLAAQSLNSGVSA. N-linked (GlcNAc...) asparagine glycans are attached at residues N66, N97, N165, N201, N233, N259, N277, N296, N312, N331, N347, N363, N379, N395, N410, N429, N445, N461, N477, N493, N509, N524, N543, N559, and N573. Disordered regions lie at residues 88–130 and 147–183; these read SSSL…SSLA and SSLASSSTTSSSLASSSTNSTTSATPTSSATSSSLSS. Residues 243–585 are compositionally biased toward low complexity; the sequence is SSISSTVSSS…ITSSASGSTG (343 aa). Residues 243-710 are disordered; sequence SSISSTVSSS…PLSNSTVAPT (468 aa). Polar residues predominate over residues 586-595; that stretch reads EFTNTNSGNG. Over residues 597–630 the composition is skewed to low complexity; it reads VSGSVTTPTSTPLSNSTVAPTSTFTSSGFNTTSG. N-linked (GlcNAc...) asparagine glycans are attached at residues N611, N626, N642, N657, N673, N688, N704, N719, and N735. Residues 631 to 647 show a composition bias toward polar residues; sequence LPTSSASTPLSNSTVAP. The segment covering 648–692 has biased composition (low complexity); it reads TSTFTSSGFNTTSGLPTSSASTPSSNSSIVPTSTFTSSGFNTTSG. The segment covering 693–709 has biased composition (polar residues); the sequence is LPTSSASTPLSNSTVAP. Composition is skewed to low complexity over residues 722–831, 838–862, and 885–906; these read SGLP…TTAS, PTAAPTNEPTVTTGTETTEGTATYT, and IPVNPGNPSSSVSAPPTTSFTP. Disordered regions lie at residues 722–862 and 885–918; these read SGLP…ATYT and IPVNPGNPSSSVSAPPTTSFTPGPGGSGYPSYSN. N918, N924, N930, N933, N939, N947, and N977 each carry an N-linked (GlcNAc...) asparagine glycan. Residues 978-1011 form a disordered region; that stretch reads TTATSGSDDDVKTASTSSSTSYTSSSSSSSSTTS. Low complexity predominate over residues 990–1011; the sequence is TASTSSSTSYTSSSSSSSSTTS. The GPI-anchor amidated serine moiety is linked to residue S1011. Residues 1012–1036 constitute a propeptide, removed in mature form; sequence AASSKASVSMGLNGLMIAAVILLVA.

It is found in the cell membrane. Its function is as follows. May be involved in agglutination during conjugation or other aspects of colony formation. Induces flocculation when overexpressed. In Schizosaccharomyces pombe (strain 972 / ATCC 24843) (Fission yeast), this protein is Putative GPI-anchored protein pfl2.